The primary structure comprises 361 residues: tRNA N6-adenosine threonylcarbamoyltransferase (361 aa).

2 residues coordinate Fe cation: H110 and H114. Substrate-binding positions include L132 to G136, D165, G178, D182, and N284. Residue D312 participates in Fe cation binding.

The protein belongs to the KAE1 / TsaD family. Fe(2+) serves as cofactor.

Its subcellular location is the cytoplasm. The catalysed reaction is L-threonylcarbamoyladenylate + adenosine(37) in tRNA = N(6)-L-threonylcarbamoyladenosine(37) in tRNA + AMP + H(+). Its function is as follows. Required for the formation of a threonylcarbamoyl group on adenosine at position 37 (t(6)A37) in tRNAs that read codons beginning with adenine. Is involved in the transfer of the threonylcarbamoyl moiety of threonylcarbamoyl-AMP (TC-AMP) to the N6 group of A37, together with TsaE and TsaB. TsaD likely plays a direct catalytic role in this reaction. The protein is tRNA N6-adenosine threonylcarbamoyltransferase of Desulfovibrio desulfuricans (strain ATCC 27774 / DSM 6949 / MB).